A 285-amino-acid polypeptide reads, in one-letter code: MLKYRLISAFVLIPVVIAALFLLPPVGFAIVTLVVCMLAAWEWGQLSGFTTRSQRVWLAVLCGLLLALMLFLLPEYHRNIHQPLVEISLWASLGWWIVALLLVLFYPGSAAIWRNSKTLRLIFGVLTIVPFFWGMLALRAWHYDENHYSGAIWLLYVMILVWGADSGAYMFGKLFGKHKLAPKVSPGKTWQGFIGGLATAAVISWGYGMWANLDVAPVTLLICSIVAALASVLGDLTESMFKREAGIKDSGHLIPGHGGILDRIDSLTAAVPVFACLLLLVFRTL.

Helical transmembrane passes span Phe-10–Ile-30, Val-56–Tyr-76, Leu-93–Trp-113, Leu-121–Trp-141, Ala-151–Phe-171, Trp-190–Trp-210, Leu-213–Leu-233, and Ile-264–Thr-284.

The protein belongs to the CDS family.

The protein localises to the cell inner membrane. It catalyses the reaction a 1,2-diacyl-sn-glycero-3-phosphate + CTP + H(+) = a CDP-1,2-diacyl-sn-glycerol + diphosphate. It functions in the pathway phospholipid metabolism; CDP-diacylglycerol biosynthesis; CDP-diacylglycerol from sn-glycerol 3-phosphate: step 3/3. The chain is Phosphatidate cytidylyltransferase (cdsA) from Escherichia coli O157:H7.